Reading from the N-terminus, the 764-residue chain is MKEENGFAGFLNTAVNRLSGVLNDTAPTKSQSLKNGVNNEGNRGFSLFRNPRFMSDEKLSSEASSHSTLGQQQARDGRQSPSKEAPFGEGELKLENFENQENEADEAENEETSYSEQNHTENTEEIAEESRPLERTHSGSNHHEASSTGHLNLPPLENTLSQGSAITAPSRKVSITSSNGVSARLSGYAFANSKRNRDFHRIFKVLPPEDHLIDDYGCALQRDIFLHGRMYLSESHICFNSSIFGWVTNIVIPVTEIVSVEKKSTAVVFPNAIQITTLHARYIFASFISRDTTYQLIIAIWKNTHPFLTTLANGHGVMDASGNHHSGSSNQSINADSSAGSEGVDEGTSTEANDESSEDDDEDNNTDEANEDAQSNVSDESPKGEGSSHSDNVVLSDGNSVKKMNEDGADTSLLSVSEVTSHPPTEWTGSPLAHVLCSDVVNLSVSTVFNLLCGSDTTWIINFFKSEKLTEIKIGKWEKIDDKWNRKVQYIKPVAPPYRQTSCYITDTIQHLDINNYIEILSTTSTPDVPSGTSFVVKTLYALSWAHSSKTKLNISYSVEWSKSSWLKGPIEKGAQEGQASYVKDLLTAFENYKVSPKGRRKKITKHTKKKNKHASETSVAPEKVDNSSIEQSSSFLTKLYTFPFTIITWLMHPTHLLLVVMFSMLVLQWWYMQQILHAELPSTSSRSDSSRDLDFDHIPMDDTAFKLWITSRLDSVERDRDFVYENSDPNLEHGKIKIATDYMERRLKKLKERLRKLEASGYI.

The Lumenal portion of the chain corresponds to 1-646 (MKEENGFAGF…LTKLYTFPFT (646 aa)). The tract at residues 22–173 (LNDTAPTKSQ…SAITAPSRKV (152 aa)) is disordered. Residue Asn23 is glycosylated (N-linked (GlcNAc...) asparagine). Composition is skewed to polar residues over residues 25 to 41 (TAPT…NNEG) and 61 to 82 (SEAS…QSPS). Ser80 is subject to Phosphoserine. Residues 98–113 (ENQENEADEAENEETS) are compositionally biased toward acidic residues. Asn118 carries an N-linked (GlcNAc...) asparagine glycan. Residues 118 to 145 (NHTENTEEIAEESRPLERTHSGSNHHEA) are compositionally biased toward basic and acidic residues. Residues 158–173 (NTLSQGSAITAPSRKV) are compositionally biased toward polar residues. In terms of domain architecture, GRAM spans 197-264 (RDFHRIFKVL…TEIVSVEKKS (68 aa)). N-linked (GlcNAc...) asparagine glycans are attached at residues Asn240 and Asn330. The disordered stretch occupies residues 320–406 (ASGNHHSGSS…DGNSVKKMNE (87 aa)). Residues 321-330 (SGNHHSGSSN) show a composition bias toward low complexity. The segment covering 331–340 (QSINADSSAG) has biased composition (polar residues). Residues 352 to 371 (ANDESSEDDDEDNNTDEANE) show a composition bias toward acidic residues. Asn364 and Asn376 each carry an N-linked (GlcNAc...) asparagine glycan. Residues 389 to 399 (HSDNVVLSDGN) show a composition bias toward polar residues. The 167-residue stretch at 432–598 (LAHVLCSDVV…AFENYKVSPK (167 aa)) folds into the VASt domain. N-linked (GlcNAc...) asparagine glycans are attached at residues Asn442 and Asn554. Basic residues predominate over residues 598 to 613 (KGRRKKITKHTKKKNK). The tract at residues 598–626 (KGRRKKITKHTKKKNKHASETSVAPEKVD) is disordered. Asn627 carries an N-linked (GlcNAc...) asparagine glycan. Residues 647 to 667 (IITWLMHPTHLLLVVMFSMLV) traverse the membrane as a helical segment. The Cytoplasmic segment spans residues 668 to 764 (LQWWYMQQIL…LRKLEASGYI (97 aa)).

Belongs to the YSP2 family.

It is found in the membrane. This is an uncharacterized protein from Schizosaccharomyces pombe (strain 972 / ATCC 24843) (Fission yeast).